The primary structure comprises 243 residues: Probable fructoselysine utilization operon transcriptional repressor (243 aa).

The region spanning 10–78 (QLLYATVRQR…QGKGTFVQSQ (69 aa)) is the HTH gntR-type domain. A DNA-binding region (H-T-H motif) is located at residues 38–57 (ENELCTQYNVSRITIRKAIS).

The protein operates within carbohydrate metabolism; fructoselysine degradation [regulation]. In terms of biological role, may regulate the transcription of the frlABCDR operon, involved in the utilization of fructoselysine and psicoselysine. The protein is Probable fructoselysine utilization operon transcriptional repressor (frlR) of Shigella flexneri.